A 264-amino-acid polypeptide reads, in one-letter code: Thymidylate synthase (264 aa).

DUMP is bound at residue Arg-21. His-51 provides a ligand contact to (6R)-5,10-methylene-5,6,7,8-tetrahydrofolate. 126–127 (RR) contacts dUMP. The Nucleophile role is filled by Cys-146. DUMP-binding positions include 166–169 (RSAD), Asn-177, and 207–209 (HLY). Asp-169 contributes to the (6R)-5,10-methylene-5,6,7,8-tetrahydrofolate binding site. Ser-263 is a binding site for (6R)-5,10-methylene-5,6,7,8-tetrahydrofolate.

This sequence belongs to the thymidylate synthase family. Bacterial-type ThyA subfamily. As to quaternary structure, homodimer.

It is found in the cytoplasm. It carries out the reaction dUMP + (6R)-5,10-methylene-5,6,7,8-tetrahydrofolate = 7,8-dihydrofolate + dTMP. The protein operates within pyrimidine metabolism; dTTP biosynthesis. Catalyzes the reductive methylation of 2'-deoxyuridine-5'-monophosphate (dUMP) to 2'-deoxythymidine-5'-monophosphate (dTMP) while utilizing 5,10-methylenetetrahydrofolate (mTHF) as the methyl donor and reductant in the reaction, yielding dihydrofolate (DHF) as a by-product. This enzymatic reaction provides an intracellular de novo source of dTMP, an essential precursor for DNA biosynthesis. This chain is Thymidylate synthase, found in Neisseria meningitidis serogroup C / serotype 2a (strain ATCC 700532 / DSM 15464 / FAM18).